The chain runs to 120 residues: Large ribosomal subunit protein uL18 (120 aa).

The protein belongs to the universal ribosomal protein uL18 family. As to quaternary structure, part of the 50S ribosomal subunit; part of the 5S rRNA/L5/L18/L25 subcomplex. Contacts the 5S and 23S rRNAs.

In terms of biological role, this is one of the proteins that bind and probably mediate the attachment of the 5S RNA into the large ribosomal subunit, where it forms part of the central protuberance. The sequence is that of Large ribosomal subunit protein uL18 from Brucella abortus (strain S19).